A 127-amino-acid chain; its full sequence is Glycine cleavage system H protein (127 aa).

One can recognise a Lipoyl-binding domain in the interval 22–104 (EVVIGITHFA…YEGAWMVKVE (83 aa)). Position 63 is an N6-lipoyllysine (Lys-63).

This sequence belongs to the GcvH family. The glycine cleavage system is composed of four proteins: P, T, L and H. (R)-lipoate is required as a cofactor.

Functionally, the glycine cleavage system catalyzes the degradation of glycine. The H protein shuttles the methylamine group of glycine from the P protein to the T protein. In terms of biological role, is also involved in protein lipoylation via its role as an octanoyl/lipoyl carrier protein intermediate. This is Glycine cleavage system H protein from Bacillus cereus (strain ATCC 10987 / NRS 248).